The primary structure comprises 600 residues: DDB1- and CUL4-associated factor 8-like protein 1 (600 aa).

Residues 1–122 are disordered; that stretch reads MSHQEGSTGG…EEEQPRMCPR (122 aa). Acidic residues-rich tracts occupy residues 74-83 and 96-115; these read SSSEDVELES and EETE…EEEE. 7 WD repeats span residues 194-233, 237-278, 284-324, 332-372, 388-427, 435-475, and 479-518; these read SHAG…PVLN, GHDI…YCEN, KHRG…PASK, DKKV…KKEN, DFPT…GAQY, RNND…IIQF, and DRGD…ATEL. Positions 562-600 are disordered; the sequence is PGWRDHGAEFPDEEELDESSSTSDTSEEEGQDRVQCIPS.

The protein belongs to the WD repeat DCAF8 family.

The polypeptide is DDB1- and CUL4-associated factor 8-like protein 1 (DCAF8L1) (Homo sapiens (Human)).